A 294-amino-acid polypeptide reads, in one-letter code: Autophagy protein 5 (294 aa).

K149 participates in a covalent cross-link: Glycyl lysine isopeptide (Lys-Gly) (interchain with G-Cter in ATG12).

This sequence belongs to the ATG5 family. Conjugated with ATG12. The ATG5-ATG12 conjugate forms a complex with several units of ATG16. The ATG12-ATG5 conjugate also associates with ATG3. Conjugated to ATG12; which is essential for autophagy. Conjugation with ATG12 involves ATG7 as an E1-like activating enzyme and ATG10 as an E2-like conjugating enzyme.

Its subcellular location is the preautophagosomal structure membrane. Involved in cytoplasm to vacuole transport (Cvt) and autophagic vesicle formation. Autophagy is essential for maintenance of amino acid levels and protein synthesis under nitrogen starvation. Required for selective autophagic degradation of the nucleus (nucleophagy). Also required for mitophagy, which eliminates defective or superfluous mitochondria in order to fulfill cellular energy requirements and prevent excess ROS production. Conjugation with ATG12, through a ubiquitin-like conjugating system involving ATG7 as an E1-like activating enzyme and ATG10 as an E2-like conjugating enzyme, is essential for its function. The ATG12-ATG5 conjugate acts as an E3-like enzyme which is required for lipidation of ATG8 and ATG8 association to the vesicle membranes. ATG12-ATG5 rearranges the ATG3 catalytic center and enhances its E2 activity. Plays a role in the regulation of filamentous growth and chronological longevity. The polypeptide is Autophagy protein 5 (ATG5) (Saccharomyces cerevisiae (strain YJM789) (Baker's yeast)).